A 418-amino-acid chain; its full sequence is Putative ion-transport protein YfeO (418 aa).

Transmembrane regions (helical) follow at residues 10–30 (LLLS…LIVV), 54–74 (DSPF…GLVI), 99–119 (ALLG…SLGP), 120–140 (EHPI…RLLP), 149–169 (ILAS…AALI), 186–206 (LFAP…FFHP), 223–243 (ILSG…AVWC), 258–278 (VLVL…GGPV), 300–320 (DYFL…ASGF), 322–342 (GGRI…LHEH), 343–363 (VPAV…VLVV), and 371–391 (LFMA…CIVM).

Belongs to the chloride channel (TC 2.A.49) family.

The protein resides in the cell membrane. This chain is Putative ion-transport protein YfeO, found in Escherichia coli O17:K52:H18 (strain UMN026 / ExPEC).